A 247-amino-acid polypeptide reads, in one-letter code: 1-(5-phosphoribosyl)-5-[(5-phosphoribosylamino)methylideneamino] imidazole-4-carboxamide isomerase (247 aa).

The Proton acceptor role is filled by Asp8. The Proton donor role is filled by Asp129.

It belongs to the HisA/HisF family.

It is found in the cytoplasm. It carries out the reaction 1-(5-phospho-beta-D-ribosyl)-5-[(5-phospho-beta-D-ribosylamino)methylideneamino]imidazole-4-carboxamide = 5-[(5-phospho-1-deoxy-D-ribulos-1-ylimino)methylamino]-1-(5-phospho-beta-D-ribosyl)imidazole-4-carboxamide. Its pathway is amino-acid biosynthesis; L-histidine biosynthesis; L-histidine from 5-phospho-alpha-D-ribose 1-diphosphate: step 4/9. The sequence is that of 1-(5-phosphoribosyl)-5-[(5-phosphoribosylamino)methylideneamino] imidazole-4-carboxamide isomerase from Rhodospirillum centenum (strain ATCC 51521 / SW).